We begin with the raw amino-acid sequence, 701 residues long: Elongation factor G (701 aa).

A tr-type G domain is found at 8-290 (SLYRNIGISA…AVVELLPAPT (283 aa)). GTP contacts are provided by residues 17-24 (AHIDAGKT), 88-92 (DTPGH), and 142-145 (NKMD).

Belongs to the TRAFAC class translation factor GTPase superfamily. Classic translation factor GTPase family. EF-G/EF-2 subfamily.

Its subcellular location is the cytoplasm. Its function is as follows. Catalyzes the GTP-dependent ribosomal translocation step during translation elongation. During this step, the ribosome changes from the pre-translocational (PRE) to the post-translocational (POST) state as the newly formed A-site-bound peptidyl-tRNA and P-site-bound deacylated tRNA move to the P and E sites, respectively. Catalyzes the coordinated movement of the two tRNA molecules, the mRNA and conformational changes in the ribosome. The polypeptide is Elongation factor G (Neisseria meningitidis serogroup C (strain 053442)).